A 621-amino-acid chain; its full sequence is 5-aminolevulinate synthase, mitochondrial (621 aa).

A disordered region spans residues 76–95; sequence DAKGSLAGRPVHHKAATEST. Substrate contacts are provided by arginine 122 and serine 234. 3 residues coordinate pyridoxal 5'-phosphate: serine 286, histidine 314, and threonine 359. The active site involves lysine 362. Lysine 362 carries the N6-(pyridoxal phosphate)lysine modification. Pyridoxal 5'-phosphate contacts are provided by threonine 391 and threonine 392. Threonine 477 lines the substrate pocket.

This sequence belongs to the class-II pyridoxal-phosphate-dependent aminotransferase family. As to quaternary structure, homodimer. Pyridoxal 5'-phosphate serves as cofactor.

The protein resides in the mitochondrion matrix. It catalyses the reaction succinyl-CoA + glycine + H(+) = 5-aminolevulinate + CO2 + CoA. Its pathway is porphyrin-containing compound metabolism; protoporphyrin-IX biosynthesis; 5-aminolevulinate from glycine: step 1/1. Catalyzes the synthesis of 5-aminolevulinate (ALA) from succinyl-CoA and glycine, the first and rate-limiting step in heme biosynthesis. In Agaricus bisporus (White button mushroom), this protein is 5-aminolevulinate synthase, mitochondrial (hem1).